The chain runs to 625 residues: Glutamine--fructose-6-phosphate aminotransferase [isomerizing] (625 aa).

Cys-2 (nucleophile; for GATase activity) is an active-site residue. One can recognise a Glutamine amidotransferase type-2 domain in the interval 2 to 229 (CGLVGYVGQR…QDQAVVITAD (228 aa)). SIS domains lie at 298–437 (SDQE…ARGT) and 470–615 (LAYR…VDKP). Catalysis depends on Lys-620, which acts as the For Fru-6P isomerization activity.

As to quaternary structure, homodimer.

Its subcellular location is the cytoplasm. The catalysed reaction is D-fructose 6-phosphate + L-glutamine = D-glucosamine 6-phosphate + L-glutamate. In terms of biological role, catalyzes the first step in hexosamine metabolism, converting fructose-6P into glucosamine-6P using glutamine as a nitrogen source. The chain is Glutamine--fructose-6-phosphate aminotransferase [isomerizing] from Mycobacterium leprae (strain TN).